Consider the following 376-residue polypeptide: Sulfate/thiosulfate import ATP-binding protein CysA 1 (376 aa).

Residues 3 to 237 (IRLTNISKKF…PNSRFVFDFL (235 aa)) enclose the ABC transporter domain. An ATP-binding site is contributed by 35–42 (GPSGSGKT).

Belongs to the ABC transporter superfamily. Sulfate/tungstate importer (TC 3.A.1.6) family. As to quaternary structure, the complex is composed of two ATP-binding proteins (CysA), two transmembrane proteins (CysT and CysW) and a solute-binding protein (CysP).

The protein resides in the cell inner membrane. The enzyme catalyses sulfate(out) + ATP + H2O = sulfate(in) + ADP + phosphate + H(+). It carries out the reaction thiosulfate(out) + ATP + H2O = thiosulfate(in) + ADP + phosphate + H(+). Part of the ABC transporter complex CysAWTP involved in sulfate/thiosulfate import. Responsible for energy coupling to the transport system. The protein is Sulfate/thiosulfate import ATP-binding protein CysA 1 of Shewanella oneidensis (strain ATCC 700550 / JCM 31522 / CIP 106686 / LMG 19005 / NCIMB 14063 / MR-1).